The chain runs to 361 residues: Inactive 2'-5'-oligoadenylate synthase 1D (361 aa).

This sequence belongs to the 2-5A synthase family. Interacts with OAS1A, the interaction inhibits OAS1A catalytic activity. Expressed specifically in oocytes (at protein level). Expressed at highest level in ovary with lesser amounts in intestine, brain, thymus lung, kidney, liver and uterus.

It localises to the cytoplasm. Functionally, does not have 2'-5'-oligoadenylate synthetase activity, but can bind double-stranded RNA. May play a role in the control of female fertility, possibly by binding to and inhibiting OAS1A. The protein is Inactive 2'-5'-oligoadenylate synthase 1D of Mus musculus (Mouse).